Reading from the N-terminus, the 126-residue chain is Large ribosomal subunit protein bL20 (126 aa).

This sequence belongs to the bacterial ribosomal protein bL20 family.

Functionally, binds directly to 23S ribosomal RNA and is necessary for the in vitro assembly process of the 50S ribosomal subunit. It is not involved in the protein synthesizing functions of that subunit. This is Large ribosomal subunit protein bL20 from Nocardia farcinica (strain IFM 10152).